We begin with the raw amino-acid sequence, 100 residues long: KRLLQDLNIKINQVIPEGGSVQDLQNLPKAWFNLVPYREVGLMTAIYLEKNFGMPYISTTPMGIVDIAECIRQIQKHVNNLALNQTFNYESYIDQQTRFV.

The protein belongs to the ChlB/BchB/BchZ family. In terms of assembly, protochlorophyllide reductase is composed of three subunits; ChlL, ChlN and ChlB. Forms a heterotetramer of two ChlB and two ChlN subunits. Requires [4Fe-4S] cluster as cofactor.

It localises to the plastid. The protein localises to the chloroplast. It carries out the reaction chlorophyllide a + oxidized 2[4Fe-4S]-[ferredoxin] + 2 ADP + 2 phosphate = protochlorophyllide a + reduced 2[4Fe-4S]-[ferredoxin] + 2 ATP + 2 H2O. It functions in the pathway porphyrin-containing compound metabolism; chlorophyll biosynthesis (light-independent). Component of the dark-operative protochlorophyllide reductase (DPOR) that uses Mg-ATP and reduced ferredoxin to reduce ring D of protochlorophyllide (Pchlide) to form chlorophyllide a (Chlide). This reaction is light-independent. The NB-protein (ChlN-ChlB) is the catalytic component of the complex. In Polytrichum commune (Haircap moss), this protein is Light-independent protochlorophyllide reductase subunit B (chlB).